Here is a 114-residue protein sequence, read N- to C-terminus: Large ribosomal subunit protein uL18 (114 aa).

The protein belongs to the universal ribosomal protein uL18 family. In terms of assembly, part of the 50S ribosomal subunit; part of the 5S rRNA/L5/L18/L25 subcomplex. Contacts the 23S rRNA. Contacts protein L27 and the 5S rRNA.

In terms of biological role, this is one of the proteins that bind and probably mediate the attachment of the 5S RNA into the large ribosomal subunit, where it forms part of the central protuberance. The protein is Large ribosomal subunit protein uL18 (rplR) of Deinococcus radiodurans (strain ATCC 13939 / DSM 20539 / JCM 16871 / CCUG 27074 / LMG 4051 / NBRC 15346 / NCIMB 9279 / VKM B-1422 / R1).